The chain runs to 340 residues: UDP-3-O-(3-hydroxymyristoyl)glucosamine N-acyltransferase (340 aa).

The active-site Proton acceptor is the H239.

Belongs to the transferase hexapeptide repeat family. LpxD subfamily. In terms of assembly, homotrimer.

It carries out the reaction a UDP-3-O-[(3R)-3-hydroxyacyl]-alpha-D-glucosamine + a (3R)-hydroxyacyl-[ACP] = a UDP-2-N,3-O-bis[(3R)-3-hydroxyacyl]-alpha-D-glucosamine + holo-[ACP] + H(+). It catalyses the reaction UDP-3-O-[(3R)-3-hydroxytetradecanoyl]-alpha-D-glucosamine + (3R)-hydroxytetradecanoyl-[ACP] = UDP-2-N,3-O-bis[(3R)-3-hydroxytetradecanoyl]-alpha-D-glucosamine + holo-[ACP] + H(+). It participates in glycolipid biosynthesis; lipid IV(A) biosynthesis; lipid IV(A) from (3R)-3-hydroxytetradecanoyl-[acyl-carrier-protein] and UDP-N-acetyl-alpha-D-glucosamine: step 3/6. Functionally, catalyzes the N-acylation of UDP-3-O-(hydroxytetradecanoyl)glucosamine using 3-hydroxytetradecanoyl-ACP as the acyl donor. Is involved in the biosynthesis of lipid A, a phosphorylated glycolipid that anchors the lipopolysaccharide to the outer membrane of the cell. The polypeptide is UDP-3-O-(3-hydroxymyristoyl)glucosamine N-acyltransferase (Yersinia enterocolitica).